The following is a 391-amino-acid chain: DNA primase small subunit PriS (391 aa).

Active-site residues include Asp-98, Asp-100, and Asp-294.

This sequence belongs to the eukaryotic-type primase small subunit family. As to quaternary structure, heterodimer of a small subunit (PriS) and a large subunit (PriL). Mg(2+) is required as a cofactor. It depends on Mn(2+) as a cofactor.

Functionally, catalytic subunit of DNA primase, an RNA polymerase that catalyzes the synthesis of short RNA molecules used as primers for DNA polymerase during DNA replication. The small subunit contains the primase catalytic core and has DNA synthesis activity on its own. Binding to the large subunit stabilizes and modulates the activity, increasing the rate of DNA synthesis while decreasing the length of the DNA fragments, and conferring RNA synthesis capability. The DNA polymerase activity may enable DNA primase to also catalyze primer extension after primer synthesis. May also play a role in DNA repair. The protein is DNA primase small subunit PriS of Halobacterium salinarum (strain ATCC 29341 / DSM 671 / R1).